A 232-amino-acid chain; its full sequence is MSNVDAAEIAKFSELAHRWWDPNSEFKPLHEINPLRLRWVDTRAPLAGKKVLDVGCGGGILAEAMAGVGATVSGIDLSEKALKVARLHLYESGKSVDYELVSAEDYAAAHPGEFDVVTCMEMLEHVPDPASVVAACARLVKPGGWVFFSTLNRNAKSYLLAVVGAEYILKLLPRGTHDYAKFIKPAELARMAREAGLETEELTGMTYNPLTKVYRLEADTDVNYLMATRREA.

S-adenosyl-L-methionine is bound by residues arginine 36, glycine 55, aspartate 76, and methionine 120.

Belongs to the methyltransferase superfamily. UbiG/COQ3 family.

It catalyses the reaction a 3-demethylubiquinol + S-adenosyl-L-methionine = a ubiquinol + S-adenosyl-L-homocysteine + H(+). The enzyme catalyses a 3-(all-trans-polyprenyl)benzene-1,2-diol + S-adenosyl-L-methionine = a 2-methoxy-6-(all-trans-polyprenyl)phenol + S-adenosyl-L-homocysteine + H(+). Its pathway is cofactor biosynthesis; ubiquinone biosynthesis. O-methyltransferase that catalyzes the 2 O-methylation steps in the ubiquinone biosynthetic pathway. The protein is Ubiquinone biosynthesis O-methyltransferase of Thiobacillus denitrificans (strain ATCC 25259 / T1).